A 1002-amino-acid chain; its full sequence is uncharacterized protein (1002 aa).

This is an uncharacterized protein from Fiji disease virus (isolate Sugarcane) (FDV).